A 107-amino-acid polypeptide reads, in one-letter code: MPLWVFFVILTLTNGSHCSPSPSLPFRIRRYADAIFTSSYRKVLGQLSARKLLQDIMSRQQGERNQEQGPRVRLGRQVDSMWADHRQMSLESLLAALLQKHSRDSQG.

Positions 1 to 19 are cleaved as a signal peptide; the sequence is MPLWVFFVILTLTNGSHCS. Residues 20 to 30 constitute a propeptide that is removed on maturation; sequence PSPSLPFRIRR. The residue at position 74 (L74) is a Leucine amide. A propeptide spanning residues 77–107 is cleaved from the precursor; the sequence is QVDSMWADHRQMSLESLLAALLQKHSRDSQG.

Belongs to the glucagon family.

It is found in the secreted. In terms of biological role, GRF is released by the hypothalamus and acts on the adenohypophyse to stimulate the secretion of growth hormone. The sequence is that of Somatoliberin (GHRH) from Mesocricetus auratus (Golden hamster).